A 429-amino-acid chain; its full sequence is MVNSCENKIFVKPTSTTILQDETRSRKFGQEMKREKRRVLRVINQNLAGARVYPCVVNKRGSLLSNKQEEEEGCQKKKFDSLRPSVTRSGVEEETNKKLKPSVPSANDFGDCIFIDEEEATLDLPMPMSLEKPYIEADPMEEVEMEDVTVEEPIVDIDVLDSKNSLAAVEYVQDLYAFYRTMERFSCVPVDYMMQQIDLNEKMRAILIDWLIEVHDKFDLINETLFLTVNLIDRFLSKQNVMRKKLQLVGLVALLLACKYEEVSVPVVEDLVLISDKAYTRNDVLEMEKTMLSTLQFNISLPTQYPFLKRFLKAAQADKKCEVLASFLIELALVEYEMLRFPPSLLAATSVYTAQCTLDGSRKWNSTCEFHCHYSEDQLMECSRKLVSLHQRAATGNLTGVYRKYSTSKFGYIAKCEAAHFLVSESHHS.

The protein belongs to the cyclin family. Cyclin AB subfamily. In terms of assembly, interacts with CDC20-1 and CDC20-2. As to expression, expressed in roots, stems, leaves, flowers and siliques.

The chain is Cyclin-B2-1 (CYCB2-1) from Arabidopsis thaliana (Mouse-ear cress).